We begin with the raw amino-acid sequence, 164 residues long: Ferredoxin-type protein NapF (164 aa).

4Fe-4S ferredoxin-type domains follow at residues 28 to 57, 58 to 89, and 132 to 161; these read GDES…RGAG, GYPS…PRHT, and YQPQ…AEYL. Residues cysteine 37, cysteine 40, cysteine 43, cysteine 47, cysteine 69, cysteine 72, cysteine 75, cysteine 79, cysteine 141, cysteine 144, cysteine 147, and cysteine 151 each coordinate [4Fe-4S] cluster.

The protein belongs to the NapF family. As to quaternary structure, interacts with the cytoplasmic NapA precursor. [4Fe-4S] cluster is required as a cofactor.

Its subcellular location is the cytoplasm. Its function is as follows. Could be involved in the maturation of NapA, the catalytic subunit of the periplasmic nitrate reductase, before its export into the periplasm. This chain is Ferredoxin-type protein NapF, found in Escherichia coli O157:H7.